Consider the following 190-residue polypeptide: MPPRPRFDRRSPVRELPNINERIKYPQLRVVDSDGKQLGVIDRLEALEIASQRELDLVLVSEKANPPVCRVMDYGKYKFEQEKKAKEARKKSHQTEVKEVKMRYKIDKHDYDVRIGQATKFLKSGDKVKCTVFFRGREIQHSNLAETLLLKMANDLEEQSEIQQKPKREGRNMIMFLSPRKTPLIKKDEG.

It belongs to the IF-3 family. As to quaternary structure, monomer.

Its subcellular location is the cytoplasm. Its function is as follows. IF-3 binds to the 30S ribosomal subunit and shifts the equilibrium between 70S ribosomes and their 50S and 30S subunits in favor of the free subunits, thus enhancing the availability of 30S subunits on which protein synthesis initiation begins. The polypeptide is Translation initiation factor IF-3 (Prochlorococcus marinus (strain MIT 9312)).